We begin with the raw amino-acid sequence, 322 residues long: UDP-N-acetylenolpyruvoylglucosamine reductase (322 aa).

In terms of domain architecture, FAD-binding PCMH-type spans 36–202 (RAGGPAQVLF…TSVLFEGVPG (167 aa)). The active site involves Arg-182. Ser-231 (proton donor) is an active-site residue. The active site involves Glu-301.

It belongs to the MurB family. It depends on FAD as a cofactor.

The protein resides in the cytoplasm. The catalysed reaction is UDP-N-acetyl-alpha-D-muramate + NADP(+) = UDP-N-acetyl-3-O-(1-carboxyvinyl)-alpha-D-glucosamine + NADPH + H(+). It functions in the pathway cell wall biogenesis; peptidoglycan biosynthesis. Its function is as follows. Cell wall formation. The chain is UDP-N-acetylenolpyruvoylglucosamine reductase from Brucella suis biovar 1 (strain 1330).